A 421-amino-acid polypeptide reads, in one-letter code: Serine--tRNA ligase (421 aa).

225-227 serves as a coordination point for L-serine; that stretch reads TAE. Residues 256–258 and valine 272 contribute to the ATP site; that span reads RSE. Glutamate 279 contributes to the L-serine binding site. Residue 345–348 coordinates ATP; sequence ETHS. Threonine 380 is a binding site for L-serine.

Belongs to the class-II aminoacyl-tRNA synthetase family. Type-1 seryl-tRNA synthetase subfamily. As to quaternary structure, homodimer. A single tRNA molecule binds across the dimer.

The protein localises to the cytoplasm. It catalyses the reaction tRNA(Ser) + L-serine + ATP = L-seryl-tRNA(Ser) + AMP + diphosphate + H(+). The enzyme catalyses tRNA(Sec) + L-serine + ATP = L-seryl-tRNA(Sec) + AMP + diphosphate + H(+). The protein operates within aminoacyl-tRNA biosynthesis; selenocysteinyl-tRNA(Sec) biosynthesis; L-seryl-tRNA(Sec) from L-serine and tRNA(Sec): step 1/1. Functionally, catalyzes the attachment of serine to tRNA(Ser). Is also probably able to aminoacylate tRNA(Sec) with serine, to form the misacylated tRNA L-seryl-tRNA(Sec), which will be further converted into selenocysteinyl-tRNA(Sec). The sequence is that of Serine--tRNA ligase (serS) from Thermus thermophilus (strain ATCC BAA-163 / DSM 7039 / HB27).